The following is a 443-amino-acid chain: D-inositol 3-phosphate glycosyltransferase (443 aa).

Histidine 26 lines the 1D-myo-inositol 3-phosphate pocket. Residues 32-33 (QP) and glycine 40 each bind UDP-N-acetyl-alpha-D-glucosamine. Residues 37-42 (DAGGMN), lysine 95, tyrosine 128, threonine 152, and arginine 172 contribute to the 1D-myo-inositol 3-phosphate site. Residues arginine 246, lysine 251, and glutamine 304 each contribute to the UDP-N-acetyl-alpha-D-glucosamine site. Residues tyrosine 313, arginine 314, and alanine 316 each contribute to the Mg(2+) site. 2 residues coordinate UDP-N-acetyl-alpha-D-glucosamine: glutamate 326 and glutamate 334. Threonine 340 provides a ligand contact to Mg(2+).

It belongs to the glycosyltransferase group 1 family. MshA subfamily. In terms of assembly, homodimer.

It catalyses the reaction 1D-myo-inositol 3-phosphate + UDP-N-acetyl-alpha-D-glucosamine = 1D-myo-inositol 2-acetamido-2-deoxy-alpha-D-glucopyranoside 3-phosphate + UDP + H(+). Its function is as follows. Catalyzes the transfer of a N-acetyl-glucosamine moiety to 1D-myo-inositol 3-phosphate to produce 1D-myo-inositol 2-acetamido-2-deoxy-glucopyranoside 3-phosphate in the mycothiol biosynthesis pathway. In Mycobacteroides abscessus (strain ATCC 19977 / DSM 44196 / CCUG 20993 / CIP 104536 / JCM 13569 / NCTC 13031 / TMC 1543 / L948) (Mycobacterium abscessus), this protein is D-inositol 3-phosphate glycosyltransferase.